A 1034-amino-acid chain; its full sequence is Protein argonaute 2 (1034 aa).

Positions methionine 1–serine 201 are disordered. Residues glycine 18–glycine 125 are compositionally biased toward gly residues. Residues valine 172 to serine 187 show a composition bias toward low complexity. The PAZ domain occupies proline 391–glutamate 504. A Piwi domain is found at leucine 688–glutamate 989.

It belongs to the argonaute family. Ago subfamily.

Its function is as follows. Probably involved in the RNA silencing pathway. May bind to short RNAs such as microRNAs (miRNAs) or short interfering RNAs (siRNAs), and represses the translation of mRNAs which are complementary to them. In Oryza sativa subsp. japonica (Rice), this protein is Protein argonaute 2 (AGO2).